We begin with the raw amino-acid sequence, 221 residues long: uncharacterized protein (221 aa).

A CUE domain is found at 20–63 (DFDRAMLDFQAMFPSLSNSHIEYVLRKYDGDVSATINELLYDNT). Residues 131-194 (EEKKKKSCSD…GPYIGEGEVK (64 aa)) are disordered. Positions 156–166 (KNSKNSKISVN) are enriched in low complexity. Residues 169 to 183 (KKLEPRRRSDEDRVP) show a composition bias toward basic and acidic residues.

This is an uncharacterized protein from Caenorhabditis elegans.